The sequence spans 188 residues: Peptidyl-tRNA hydrolase (188 aa).

TRNA is bound at residue Tyr14. Catalysis depends on His19, which acts as the Proton acceptor. The tRNA site is built by Tyr64, Asn66, and Asn112.

It belongs to the PTH family. In terms of assembly, monomer.

It localises to the cytoplasm. It carries out the reaction an N-acyl-L-alpha-aminoacyl-tRNA + H2O = an N-acyl-L-amino acid + a tRNA + H(+). Hydrolyzes ribosome-free peptidyl-tRNAs (with 1 or more amino acids incorporated), which drop off the ribosome during protein synthesis, or as a result of ribosome stalling. Functionally, catalyzes the release of premature peptidyl moieties from peptidyl-tRNA molecules trapped in stalled 50S ribosomal subunits, and thus maintains levels of free tRNAs and 50S ribosomes. Releases Ala-tailed nascent peptides from stalled 50S ribosomal subunits. Non-templated Ala tailing occurs as part of the ribosome quality control (RQC) pathway. In the absence of Ala tails significantly less peptide release occurs. The Ala tail facilitates the interaction of Pth with the nascent peptide-tRNA ester bond as well as promoting nascent chain degradation; 3 Ala residues suffice to stimulate peptide release from stalled 50S ribosomal subunits. Complements a temperature-sensitive pth mutation in E.coli. This chain is Peptidyl-tRNA hydrolase, found in Bacillus subtilis (strain 168).